The chain runs to 443 residues: ATP-dependent protease ATPase subunit HslU (443 aa).

ATP is bound by residues isoleucine 20, 62-67, aspartate 255, glutamate 321, and arginine 393; that span reads GVGKTE.

The protein belongs to the ClpX chaperone family. HslU subfamily. As to quaternary structure, a double ring-shaped homohexamer of HslV is capped on each side by a ring-shaped HslU homohexamer. The assembly of the HslU/HslV complex is dependent on binding of ATP.

It localises to the cytoplasm. ATPase subunit of a proteasome-like degradation complex; this subunit has chaperone activity. The binding of ATP and its subsequent hydrolysis by HslU are essential for unfolding of protein substrates subsequently hydrolyzed by HslV. HslU recognizes the N-terminal part of its protein substrates and unfolds these before they are guided to HslV for hydrolysis. The polypeptide is ATP-dependent protease ATPase subunit HslU (Helicobacter pylori (strain ATCC 700392 / 26695) (Campylobacter pylori)).